Here is a 576-residue protein sequence, read N- to C-terminus: Proline--tRNA ligase (576 aa).

The protein belongs to the class-II aminoacyl-tRNA synthetase family. ProS type 1 subfamily. As to quaternary structure, homodimer.

Its subcellular location is the cytoplasm. The catalysed reaction is tRNA(Pro) + L-proline + ATP = L-prolyl-tRNA(Pro) + AMP + diphosphate. Its function is as follows. Catalyzes the attachment of proline to tRNA(Pro) in a two-step reaction: proline is first activated by ATP to form Pro-AMP and then transferred to the acceptor end of tRNA(Pro). As ProRS can inadvertently accommodate and process non-cognate amino acids such as alanine and cysteine, to avoid such errors it has two additional distinct editing activities against alanine. One activity is designated as 'pretransfer' editing and involves the tRNA(Pro)-independent hydrolysis of activated Ala-AMP. The other activity is designated 'posttransfer' editing and involves deacylation of mischarged Ala-tRNA(Pro). The misacylated Cys-tRNA(Pro) is not edited by ProRS. This chain is Proline--tRNA ligase, found in Bordetella bronchiseptica (strain ATCC BAA-588 / NCTC 13252 / RB50) (Alcaligenes bronchisepticus).